Here is a 476-residue protein sequence, read N- to C-terminus: E3 SUMO-protein ligase EGR2 (476 aa).

Positions 127-141 (PASTTASSSVTSASP) are enriched in low complexity. Residues 127-178 (PASTTASSSVTSASPNPLATGPLGVCTMSQTQPDLDHLYSPPPPPPPYSGCA) are disordered. Residues 162–165 (DHLY) carry the HCFC1-binding-motif (HBM) motif. Residue Lys-247 is modified to N6-acetyllysine; by EP300. Disordered regions lie at residues 275-300 (GPSAGVTGPGASGGSEGPRLPGSSSA) and 318-341 (RPILRPRKYPNRPSKTPVHERPYP). Gly residues predominate over residues 281–290 (TGPGASGGSE). C2H2-type zinc fingers lie at residues 340-364 (YPCPAEGCDRRFSRSDELTRHIRIH), 370-392 (FQCRICMRNFSRSDHLTTHIRTH), and 398-420 (FACDYCGRKFARSDERKRHTKIH). The segment at 412–476 (ERKRHTKIHL…APCSSRTRTP (65 aa)) is disordered. Residues 415 to 425 (RHTKIHLRQKE) show a composition bias toward basic residues. Low complexity predominate over residues 429–476 (SAPSASVPAPSTASCSGGVQPGGTLCSSNSSSLGGGPLAPCSSRTRTP).

The protein belongs to the EGR C2H2-type zinc-finger protein family. In terms of assembly, interacts with HCFC1. Interacts with WWP2. Interacts with UBC9. Interacts with CITED1. Interacts (via phosphorylated form) with SFN. Post-translationally, ubiquitinated by WWP2 leading to proteasomal degradation. Acetylated at Lys-247. May be deacetylated by HDAC6, HDAC10 or SIRT1.

Its subcellular location is the nucleus. The protein operates within protein modification; protein sumoylation. Sequence-specific DNA-binding transcription factor. Plays a role in hindbrain segmentation by regulating the expression of a subset of homeobox containing genes and in Schwann cell myelination by regulating the expression of genes involved in the formation and maintenance of myelin. Binds to two EGR2-consensus sites EGR2A (5'-CTGTAGGAG-3') and EGR2B (5'-ATGTAGGTG-3') in the HOXB3 enhancer and promotes HOXB3 transcriptional activation. Binds to specific DNA sites located in the promoter region of HOXA4, HOXB2 and ERBB2. Regulates hindbrain segmentation by controlling the expression of Hox genes, such as HOXA4, HOXB3 and HOXB2, and thereby specifying odd and even rhombomeres. Promotes the expression of HOXB3 in the rhombomere r5 in the hindbrain. Regulates myelination in the peripheral nervous system after birth, possibly by regulating the expression of myelin proteins, such as MPZ, and by promoting the differentiation of Schwann cells. Involved in the development of the jaw openener musculature, probably by playing a role in its innervation through trigeminal motor neurons. May play a role in adipogenesis, possibly by regulating the expression of CEBPB. In terms of biological role, E3 SUMO-protein ligase helping SUMO1 conjugation to its coregulators NAB1 and NAB2, whose sumoylation down-regulates EGR2 transcriptional activity. This chain is E3 SUMO-protein ligase EGR2 (EGR2), found in Homo sapiens (Human).